The primary structure comprises 340 residues: Cysteinyl leukotriene receptor 1 (340 aa).

Residues 1–31 lie on the Extracellular side of the membrane; sequence MDGVRNLTVSCASSNTCNDTIDDFRNQVYST. Residues Asn-6 and Asn-18 are each glycosylated (N-linked (GlcNAc...) asparagine). Residues 32 to 52 form a helical membrane-spanning segment; it reads LYSMITVVGFFGNGFVLYVLI. Over 53–60 the chain is Cytoplasmic; it reads KTYHEKSA. A helical membrane pass occupies residues 61 to 81; sequence YQVYMINLAVADLLCVCTLPL. Topologically, residues 82-109 are extracellular; sequence RVVYYVHKGIWLFGDFLCRLSTYALYVN. A disulfide bond links Cys-99 and Cys-176. The chain crosses the membrane as a helical span at residues 110-130; it reads LYCSIFFMTAMSFFRCIAIVF. Residues 131 to 144 are Cytoplasmic-facing; sequence PVQNINLITHKKAK. The helical transmembrane segment at 145 to 165 threads the bilayer; the sequence is IVCIAIWIFVILTSSPFLMST. The Extracellular segment spans residues 166–196; sequence SYKDEKNNTKCFEPPQXNQAKYHVLVLHYVS. The N-linked (GlcNAc...) asparagine glycan is linked to Asn-172. The chain crosses the membrane as a helical span at residues 197-217; the sequence is LFVGFIIPFVIIIVCYTMIIL. Over 218–233 the chain is Cytoplasmic; that stretch reads TLLKNSMKKNISSRKK. A helical membrane pass occupies residues 234–254; that stretch reads AIGMIIVVTAAFLISFMPYHI. Topologically, residues 255-279 are extracellular; the sequence is QRTIHLHFLHNDTKHCDSVLRMQKS. Asn-265 carries an N-linked (GlcNAc...) asparagine glycan. A helical transmembrane segment spans residues 280 to 300; sequence VXITLSLAASNCCFDPLLYFF. At 301–340 the chain is on the cytoplasmic side; sequence SGGNFREGLSTFRKHSLSTMTYVPKKKTSLPEKAQEIYKE.

The protein belongs to the G-protein coupled receptor 1 family.

Its subcellular location is the cell membrane. Receptor for cysteinyl leukotrienes mediating constriction of the microvascular smooth muscle during an inflammatory response. This response is mediated via a G-protein that activates a phosphatidylinositol-calcium second messenger system. The chain is Cysteinyl leukotriene receptor 1 (CYSLTR1) from Sus scrofa (Pig).